We begin with the raw amino-acid sequence, 445 residues long: UPF0210 protein SPT_0285 (445 aa).

It belongs to the UPF0210 family. As to quaternary structure, homodimer.

In Streptococcus pneumoniae (strain Taiwan19F-14), this protein is UPF0210 protein SPT_0285.